The primary structure comprises 272 residues: Phosphatidylglycerol--prolipoprotein diacylglyceryl transferase (272 aa).

A run of 4 helical transmembrane segments spans residues Leu-15–Phe-35, Ala-53–Val-73, Gly-94–Ile-114, and Val-117–Ala-137. Residue Arg-138 coordinates a 1,2-diacyl-sn-glycero-3-phospho-(1'-sn-glycerol). The next 3 membrane-spanning stretches (helical) occupy residues Phe-174–Val-194, Val-199–Gly-219, and Phe-237–Ala-257.

Belongs to the Lgt family.

The protein localises to the cell membrane. The catalysed reaction is L-cysteinyl-[prolipoprotein] + a 1,2-diacyl-sn-glycero-3-phospho-(1'-sn-glycerol) = an S-1,2-diacyl-sn-glyceryl-L-cysteinyl-[prolipoprotein] + sn-glycerol 1-phosphate + H(+). It functions in the pathway protein modification; lipoprotein biosynthesis (diacylglyceryl transfer). In terms of biological role, catalyzes the transfer of the diacylglyceryl group from phosphatidylglycerol to the sulfhydryl group of the N-terminal cysteine of a prolipoprotein, the first step in the formation of mature lipoproteins. This chain is Phosphatidylglycerol--prolipoprotein diacylglyceryl transferase, found in Tropheryma whipplei (strain TW08/27) (Whipple's bacillus).